The chain runs to 488 residues: Membrane-bound lytic murein transglycosylase F (488 aa).

The signal sequence occupies residues 1–25; sequence MFARPAIRMRCATGLLAIGTLLMLA. The interval 26–269 is non-LT domain; that stretch reads GCGEEPKPSV…RLKERYYGHV (244 aa). An LT domain region spans residues 270–488; sequence DVLGYVGAYT…RTLDEQTPPL (219 aa). E316 is a catalytic residue.

The protein in the N-terminal section; belongs to the bacterial solute-binding protein 3 family. It in the C-terminal section; belongs to the transglycosylase Slt family.

It is found in the cell outer membrane. The catalysed reaction is Exolytic cleavage of the (1-&gt;4)-beta-glycosidic linkage between N-acetylmuramic acid (MurNAc) and N-acetylglucosamine (GlcNAc) residues in peptidoglycan, from either the reducing or the non-reducing ends of the peptidoglycan chains, with concomitant formation of a 1,6-anhydrobond in the MurNAc residue.. Its function is as follows. Murein-degrading enzyme that degrades murein glycan strands and insoluble, high-molecular weight murein sacculi, with the concomitant formation of a 1,6-anhydromuramoyl product. Lytic transglycosylases (LTs) play an integral role in the metabolism of the peptidoglycan (PG) sacculus. Their lytic action creates space within the PG sacculus to allow for its expansion as well as for the insertion of various structures such as secretion systems and flagella. This is Membrane-bound lytic murein transglycosylase F from Ectopseudomonas mendocina (strain ymp) (Pseudomonas mendocina).